Consider the following 557-residue polypeptide: Urocanate hydratase (557 aa).

NAD(+) is bound by residues 52 to 53 (GG), glutamine 130, 176 to 178 (GMG), glutamate 196, 242 to 243 (NA), 263 to 267 (QTSAH), 273 to 274 (YL), and tyrosine 322. Cysteine 410 is a catalytic residue. Glycine 492 contributes to the NAD(+) binding site.

This sequence belongs to the urocanase family. Requires NAD(+) as cofactor.

It localises to the cytoplasm. It carries out the reaction 4-imidazolone-5-propanoate = trans-urocanate + H2O. Its pathway is amino-acid degradation; L-histidine degradation into L-glutamate; N-formimidoyl-L-glutamate from L-histidine: step 2/3. Functionally, catalyzes the conversion of urocanate to 4-imidazolone-5-propionate. The sequence is that of Urocanate hydratase from Rhizobium meliloti (strain 1021) (Ensifer meliloti).